The primary structure comprises 253 residues: Phosphoribosylaminoimidazole-succinocarboxamide synthase (253 aa).

Belongs to the SAICAR synthetase family.

It carries out the reaction 5-amino-1-(5-phospho-D-ribosyl)imidazole-4-carboxylate + L-aspartate + ATP = (2S)-2-[5-amino-1-(5-phospho-beta-D-ribosyl)imidazole-4-carboxamido]succinate + ADP + phosphate + 2 H(+). It functions in the pathway purine metabolism; IMP biosynthesis via de novo pathway; 5-amino-1-(5-phospho-D-ribosyl)imidazole-4-carboxamide from 5-amino-1-(5-phospho-D-ribosyl)imidazole-4-carboxylate: step 1/2. The sequence is that of Phosphoribosylaminoimidazole-succinocarboxamide synthase from Dinoroseobacter shibae (strain DSM 16493 / NCIMB 14021 / DFL 12).